Consider the following 415-residue polypeptide: Protein maelstrom homolog (415 aa).

A DNA-binding region (HMG box) is located at residues 4-73; sequence KKAARNAYFF…DPDSTSTYND (70 aa). Residues 367–399 are disordered; sequence SSDPKYSTDKSERSSFEPRGVKPYQGPSGGGRG. Residues 372–386 show a composition bias toward basic and acidic residues; it reads YSTDKSERSSFEPRG.

Belongs to the maelstrom family.

The protein localises to the cytoplasm. Its subcellular location is the nucleus. Its function is as follows. Plays a central role during spermatogenesis by repressing transposable elements and preventing their mobilization, which is essential for the germline integrity. Acts via the piRNA metabolic process, which mediates the repression of transposable elements during meiosis by forming complexes composed of piRNAs and Piwi proteins and governs the methylation and subsequent repression of transposons. Its association with piP-bodies suggests a participation in the secondary piRNAs metabolic process. Required for the localization of germ-cell factors to the meiotic nuage. This is Protein maelstrom homolog (mael) from Xenopus tropicalis (Western clawed frog).